The chain runs to 22 residues: Brevinin-1OKa (22 aa).

Lysine 22 is subject to Lysine amide.

In terms of tissue distribution, expressed by the skin glands.

Its subcellular location is the secreted. In terms of biological role, antimicrobial peptide. Active against Gram-negative bacterium E.coli (MIC=12.5 uM) and against Gram-positive bacterium S.aureus (MIC=12.5 uM). This Nidirana okinavana (Kampira Falls frog) protein is Brevinin-1OKa.